The following is a 950-amino-acid chain: Glycine dehydrogenase (decarboxylating) (950 aa).

Lysine 698 carries the N6-(pyridoxal phosphate)lysine modification.

This sequence belongs to the GcvP family. In terms of assembly, the glycine cleavage system is composed of four proteins: P, T, L and H. Pyridoxal 5'-phosphate is required as a cofactor.

It catalyses the reaction N(6)-[(R)-lipoyl]-L-lysyl-[glycine-cleavage complex H protein] + glycine + H(+) = N(6)-[(R)-S(8)-aminomethyldihydrolipoyl]-L-lysyl-[glycine-cleavage complex H protein] + CO2. Its function is as follows. The glycine cleavage system catalyzes the degradation of glycine. The P protein binds the alpha-amino group of glycine through its pyridoxal phosphate cofactor; CO(2) is released and the remaining methylamine moiety is then transferred to the lipoamide cofactor of the H protein. The chain is Glycine dehydrogenase (decarboxylating) from Neisseria gonorrhoeae (strain ATCC 700825 / FA 1090).